Consider the following 849-residue polypeptide: MANILRKIIENDKGEIKKLEKTAKKVESYADAMAALSDEELQAKTEEFKQRYQNGESLDQLLPEAFAVVREGAKRVLGLFPYRVQIMGGIVLHYGDVAEMRTGEGKTLTATMPVYLNAISGEGVHVITVNEYLSERDATEMGELYSWLGLSVGINLSSKSPAEKREAYNCDITYSTSSEVGFDYLRDNMVVRKENMVQRPLNFALVDEVDSVLIDEARTPLIVSGPVSSETNQLYHRADAFVKTLTEDDYAIDIPTKTIGLNDSGIDKAEEFFNLENLYDIDNVALTHYIDNALRANYIMLRDIDYVVSPEQEILIVDQFTGRTMEGRRFSDGLHQAIEAKEGVPVQEETKTSASITYQNMFRMYKKLSGMTGTGKTEEDEFREIYNMRVIPIPTNRPIQRIDHDDLLYSTLDAKFRAVVQDVKRRYEKGQPVLIGTVAVETSDLISKMLVDAGIPHEVLNAKNHEKEAHIIMNAGQRGAVTIATNMAGRGTDIKLGEGVLELGGLCVIGTERHESRRIDNQLRGRSGRQGDPGESQFYLSLEDELMRRFGSDRIKHVLERLNADDEDIVIKSRMLTRQVESAQKRVEGNNYDTRKQVLQYDDVMREQREIIYAERYDVITAERDLEPEIKAMIKRTINRTVDGHSRNDQEEALKGILNFARQALVPEDAISLEDLKEVGEVTKRSVNYDAIKVYLTELADNVYDRQIKKLRSEEAIREFQKVLILMVVDNKWTDHIDALDQLRNAVGMRGYAQNNPIVEYQSESFKMFQDMIGAIEYDVTRTMMKAQIHEQSREHVNERVSTTATGNIQAHQADANGQEIDFSKVGRNDFCPCGSGKKFKNCHGRKQF.

ATP contacts are provided by residues glutamine 85, 103–107 (GEGKT), and aspartate 493. Zn(2+) is bound by residues cysteine 832, cysteine 834, cysteine 843, and histidine 844.

It belongs to the SecA family. As to quaternary structure, monomer and homodimer. Part of the essential Sec protein translocation apparatus which comprises SecA, SecYEG and auxiliary proteins SecDF. Other proteins may also be involved. It depends on Zn(2+) as a cofactor.

It localises to the cell membrane. It is found in the cytoplasm. It carries out the reaction ATP + H2O + cellular proteinSide 1 = ADP + phosphate + cellular proteinSide 2.. In terms of biological role, part of the Sec protein translocase complex. Interacts with the SecYEG preprotein conducting channel. Has a central role in coupling the hydrolysis of ATP to the transfer of proteins into and across the cell membrane, serving as an ATP-driven molecular motor driving the stepwise translocation of polypeptide chains across the membrane. In Streptococcus thermophilus (strain ATCC BAA-491 / LMD-9), this protein is Protein translocase subunit SecA.